Consider the following 678-residue polypeptide: Methionine--tRNA ligase (678 aa).

The short motif at 18 to 28 (PYANGPIHLGH) is the 'HIGH' region element. Residues Cys-149, Cys-152, Cys-162, and Cys-165 each coordinate Zn(2+). A 'KMSKS' region motif is present at residues 334–338 (KMSKS). Residue Lys-337 coordinates ATP. The tRNA-binding domain occupies 577–678 (DFAKVDLRVA…SGATPGMRVM (102 aa)).

It belongs to the class-I aminoacyl-tRNA synthetase family. MetG type 1 subfamily. In terms of assembly, homodimer. Requires Zn(2+) as cofactor.

It is found in the cytoplasm. It catalyses the reaction tRNA(Met) + L-methionine + ATP = L-methionyl-tRNA(Met) + AMP + diphosphate. Its function is as follows. Is required not only for elongation of protein synthesis but also for the initiation of all mRNA translation through initiator tRNA(fMet) aminoacylation. The protein is Methionine--tRNA ligase of Marinobacter nauticus (strain ATCC 700491 / DSM 11845 / VT8) (Marinobacter aquaeolei).